The chain runs to 362 residues: 3-dehydroquinate synthase (362 aa).

Residues 71–76 (DGEQYK), 105–109 (GVVGD), 129–130 (TT), K142, K151, and 169–172 (CLKT) each bind NAD(+). Zn(2+)-binding residues include E184, H247, and H264.

It belongs to the sugar phosphate cyclases superfamily. Dehydroquinate synthase family. It depends on NAD(+) as a cofactor. Requires Co(2+) as cofactor. Zn(2+) serves as cofactor.

It is found in the cytoplasm. It catalyses the reaction 7-phospho-2-dehydro-3-deoxy-D-arabino-heptonate = 3-dehydroquinate + phosphate. The protein operates within metabolic intermediate biosynthesis; chorismate biosynthesis; chorismate from D-erythrose 4-phosphate and phosphoenolpyruvate: step 2/7. Catalyzes the conversion of 3-deoxy-D-arabino-heptulosonate 7-phosphate (DAHP) to dehydroquinate (DHQ). The sequence is that of 3-dehydroquinate synthase from Shigella flexneri.